The primary structure comprises 269 residues: Phosphatidylglycerol--prolipoprotein diacylglyceryl transferase (269 aa).

The next 7 membrane-spanning stretches (helical) occupy residues 17–37 (IGPI…MLGW), 59–79 (FLVW…VLFY), 95–115 (WQGG…IIAF), 123–143 (LFQV…FGRI), 181–201 (AGLE…LTGI), 206–226 (GALS…SEFF), and 242–262 (MGQL…AWAL). Arg142 serves as a coordination point for a 1,2-diacyl-sn-glycero-3-phospho-(1'-sn-glycerol).

It belongs to the Lgt family.

The protein localises to the cell inner membrane. It carries out the reaction L-cysteinyl-[prolipoprotein] + a 1,2-diacyl-sn-glycero-3-phospho-(1'-sn-glycerol) = an S-1,2-diacyl-sn-glyceryl-L-cysteinyl-[prolipoprotein] + sn-glycerol 1-phosphate + H(+). It participates in protein modification; lipoprotein biosynthesis (diacylglyceryl transfer). Its function is as follows. Catalyzes the transfer of the diacylglyceryl group from phosphatidylglycerol to the sulfhydryl group of the N-terminal cysteine of a prolipoprotein, the first step in the formation of mature lipoproteins. This is Phosphatidylglycerol--prolipoprotein diacylglyceryl transferase from Paramagnetospirillum magneticum (strain ATCC 700264 / AMB-1) (Magnetospirillum magneticum).